Reading from the N-terminus, the 229-residue chain is Potassium/proton antiporter CemA (229 aa).

The next 3 membrane-spanning stretches (helical) occupy residues 7-27 (LNPL…SLSF), 106-126 (IILH…YSIL), and 189-209 (IISG…KYWI).

This sequence belongs to the CemA family.

It is found in the plastid. It localises to the chloroplast inner membrane. It carries out the reaction K(+)(in) + H(+)(out) = K(+)(out) + H(+)(in). In terms of biological role, contributes to K(+)/H(+) antiport activity by supporting proton efflux to control proton extrusion and homeostasis in chloroplasts in a light-dependent manner to modulate photosynthesis. Prevents excessive induction of non-photochemical quenching (NPQ) under continuous-light conditions. Indirectly promotes efficient inorganic carbon uptake into chloroplasts. The chain is Potassium/proton antiporter CemA from Nymphaea alba (White water-lily).